Here is a 254-residue protein sequence, read N- to C-terminus: Low affinity immunoglobulin gamma Fc region receptor III-A (254 aa).

The N-terminal stretch at 1 to 20 (MWHLLPPSALLLLISSVTKA) is a signal peptide. At 21–209 (ADPSKAVVLL…IAPLFPLWQQ (189 aa)) the chain is on the extracellular side. 2 Ig-like C2-type domains span residues 23–104 (PSKA…VQLQ) and 121–174 (KGES…YYCR). 4 N-linked (GlcNAc...) asparagine glycosylation sites follow: Asn-42, Asn-63, Asn-166, and Asn-181. Intrachain disulfides connect Cys-47–Cys-90 and Cys-129–Cys-173. A helical membrane pass occupies residues 210–230 (IAFCLMMGLLFAVDTGLYFFV). Residues 231–254 (RRDLRRSMVHKEEYNFKWSQAQDK) lie on the Cytoplasmic side of the membrane.

As to quaternary structure, forms a heterooligomeric complex with ITAM-containing signaling subunits FCER1G. Interacts (via transmembrane domain) with signaling subunits; this interaction is a prerequisite for receptor complex expression on the cell surface and intracellular signal transduction. Binds the Fc region of antigen-complexed IgG. In terms of processing, N-glycosylated. Post-translationally, phosphorylated following receptor ligation.

The protein localises to the cell membrane. Receptor for the invariable Fc fragment of immunoglobulin gamma (IgG). Binds with intermediate affinity to both IgG2a and IgG2b. Can bind to IgG2a and IgG2b monomers. Does not display binding to IgG1 or IgG3. Recognizes neutralizing virus-specific IgGs displayed on the cell surface of infected cells and triggers antibody-dependent cellular cytotoxicity (ADCC). Confers protection to lethal influenza virus infection. On splenic dendritic cells, uptakes antigen immune complexes and efficiently divert them into MHC class I and II antigen presentation pathways to provide for superior priming of CD4-positive and CD8-positive T cell immune responses. Mediates neutrophil activation by IgG complexes redundantly with FCGR2A. Plays a role in promoting bone resorption by enhancing osteoclast differentiation following binding to IgG2a. Also acts as a receptor for the Fc region of immunoglobulin epsilon (IgE). Binds with low affinity to both the a and b allotypes of IgE. Has also been shown to bind to IgE allotype a only but not to allotype b. Binds aggregated IgE but not the monomeric form and bound monomeric IgG is readily displaced by IgE complexes. Binding to IgE promotes macrophage-mediated phagocytosis, antigen presentation to T cells, production of pro-inflammatory cytokines and the late phase of cutaneous allergic reactions. Mediates enhanced ADCC in response to afucosylated IgGs. This Cavia porcellus (Guinea pig) protein is Low affinity immunoglobulin gamma Fc region receptor III-A.